A 246-amino-acid polypeptide reads, in one-letter code: Indole-3-glycerol phosphate synthase (246 aa).

Belongs to the TrpC family.

It catalyses the reaction 1-(2-carboxyphenylamino)-1-deoxy-D-ribulose 5-phosphate + H(+) = (1S,2R)-1-C-(indol-3-yl)glycerol 3-phosphate + CO2 + H2O. It participates in amino-acid biosynthesis; L-tryptophan biosynthesis; L-tryptophan from chorismate: step 4/5. In Sulfurisphaera tokodaii (strain DSM 16993 / JCM 10545 / NBRC 100140 / 7) (Sulfolobus tokodaii), this protein is Indole-3-glycerol phosphate synthase.